Reading from the N-terminus, the 159-residue chain is Endoribonuclease YbeY (159 aa).

Residues histidine 117, histidine 121, and histidine 127 each contribute to the Zn(2+) site.

This sequence belongs to the endoribonuclease YbeY family. The cofactor is Zn(2+).

The protein localises to the cytoplasm. Functionally, single strand-specific metallo-endoribonuclease involved in late-stage 70S ribosome quality control and in maturation of the 3' terminus of the 16S rRNA. The chain is Endoribonuclease YbeY from Azorhizobium caulinodans (strain ATCC 43989 / DSM 5975 / JCM 20966 / LMG 6465 / NBRC 14845 / NCIMB 13405 / ORS 571).